A 552-amino-acid chain; its full sequence is Putative transport protein YPTS_4123 (552 aa).

The next 6 membrane-spanning stretches (helical) occupy residues 1 to 21, 26 to 46, 65 to 85, 96 to 116, 119 to 139, and 158 to 178; these read MSAIALTVSMLALVAVLGLWI, IYGVGLGIGGVLFGGIIVGHF, FGLILFVYTIGIQVGPGFFSS, FAILMVVVGGLVTAIIHKLFA, LPIILGVFSGAVTNTPALGAA, and MGYAMAYPFGICGILLVMWLI. RCK C-terminal domains lie at 192–276 and 279–361; these read AFDS…VVGE and DVTL…IVGN. The next 6 membrane-spanning stretches (helical) occupy residues 371–391, 393–413, 439–459, 464–484, 493–513, and 530–550; these read MLPVFIGVGLGVLLGSIPLFV, GFPAALRLGLAGGPLVVALIL, IVLFLSVVGLKSGGDFINTLV, LAWIGYGAMITGIPLLTVGIL, YLTLCGMLAGSMTDPPALAFA, and VYPLAMFLRIMSPQILAVLFW.

Belongs to the AAE transporter (TC 2.A.81) family. YidE subfamily.

The protein resides in the cell membrane. This Yersinia pseudotuberculosis serotype IB (strain PB1/+) protein is Putative transport protein YPTS_4123.